The following is a 232-amino-acid chain: Phosphatidylserine decarboxylase proenzyme (232 aa).

Serine 190 functions as the Schiff-base intermediate with substrate; via pyruvic acid in the catalytic mechanism. Residue serine 190 is modified to Pyruvic acid (Ser); by autocatalysis.

Belongs to the phosphatidylserine decarboxylase family. PSD-A subfamily. Heterodimer of a large membrane-associated beta subunit and a small pyruvoyl-containing alpha subunit. The cofactor is pyruvate. Is synthesized initially as an inactive proenzyme. Formation of the active enzyme involves a self-maturation process in which the active site pyruvoyl group is generated from an internal serine residue via an autocatalytic post-translational modification. Two non-identical subunits are generated from the proenzyme in this reaction, and the pyruvate is formed at the N-terminus of the alpha chain, which is derived from the carboxyl end of the proenzyme. The post-translation cleavage follows an unusual pathway, termed non-hydrolytic serinolysis, in which the side chain hydroxyl group of the serine supplies its oxygen atom to form the C-terminus of the beta chain, while the remainder of the serine residue undergoes an oxidative deamination to produce ammonia and the pyruvoyl prosthetic group on the alpha chain.

It localises to the cell membrane. It catalyses the reaction a 1,2-diacyl-sn-glycero-3-phospho-L-serine + H(+) = a 1,2-diacyl-sn-glycero-3-phosphoethanolamine + CO2. The protein operates within phospholipid metabolism; phosphatidylethanolamine biosynthesis; phosphatidylethanolamine from CDP-diacylglycerol: step 2/2. Functionally, catalyzes the formation of phosphatidylethanolamine (PtdEtn) from phosphatidylserine (PtdSer). This chain is Phosphatidylserine decarboxylase proenzyme, found in Agrobacterium fabrum (strain C58 / ATCC 33970) (Agrobacterium tumefaciens (strain C58)).